The primary structure comprises 96 residues: Cobalt transport protein CbiN (96 aa).

Helical transmembrane passes span 4–24 (WLAA…VSAG) and 59–79 (IESL…GYYL).

This sequence belongs to the CbiN family. Forms an energy-coupling factor (ECF) transporter complex composed of an ATP-binding protein (A component, CbiO), a transmembrane protein (T component, CbiQ) and 2 possible substrate-capture proteins (S components, CbiM and CbiN) of unknown stoichimetry.

The protein localises to the cell membrane. Its pathway is cofactor biosynthesis; adenosylcobalamin biosynthesis. Functionally, part of the energy-coupling factor (ECF) transporter complex CbiMNOQ involved in cobalt import. This Halobacterium salinarum (strain ATCC 29341 / DSM 671 / R1) protein is Cobalt transport protein CbiN.